A 458-amino-acid chain; its full sequence is NADH-quinone oxidoreductase subunit N (458 aa).

Helical transmembrane passes span 2–22 (LLLLPEITLTLIALLGQFFAV), 30–50 (IISNIIILLCILSIFLTFKYS), 62–82 (GINIGISKSIVLLFTIISMII), 94–114 (LKFEFITLMLLSVVGIFVAIS), 118–138 (FLLLFCGMELTALTSYALAGF), 153–173 (FILGSLVSCLSLFGISFIYGF), 194–214 (LGLIIGIILFLSSIFFKLSSV), 235–255 (FNAASKIGMVIVLLNISKLII), 261–281 (INYNLIKIIAILSMLFGAFGA), 290–310 (LMAYSTILNIGYVLIGVLLHN), 318–338 (LLYMLIYAVGSIGFFTCLIIL), 361–381 (IAAVISIVMFSMIGIPPLTGF), 397–417 (FALAYCGIFTSVVAAFYYLKV), and 438–458 (LLLINYLVVGFLLLGSFIISF).

This sequence belongs to the complex I subunit 2 family. In terms of assembly, NDH-1 is composed of 14 different subunits. Subunits NuoA, H, J, K, L, M, N constitute the membrane sector of the complex.

It is found in the cell inner membrane. The catalysed reaction is a quinone + NADH + 5 H(+)(in) = a quinol + NAD(+) + 4 H(+)(out). Functionally, NDH-1 shuttles electrons from NADH, via FMN and iron-sulfur (Fe-S) centers, to quinones in the respiratory chain. The immediate electron acceptor for the enzyme in this species is believed to be ubiquinone. Couples the redox reaction to proton translocation (for every two electrons transferred, four hydrogen ions are translocated across the cytoplasmic membrane), and thus conserves the redox energy in a proton gradient. This Rickettsia conorii (strain ATCC VR-613 / Malish 7) protein is NADH-quinone oxidoreductase subunit N.